The chain runs to 65 residues: Large ribosomal subunit protein uL29 (65 aa).

The protein belongs to the universal ribosomal protein uL29 family.

This is Large ribosomal subunit protein uL29 (rpmC) from Xylella fastidiosa (strain 9a5c).